The sequence spans 116 residues: MSNIIKQIEQEQLKQNVPSFRPGDTLEVKVWVVEGSKRRLQAFEGVVIAIRNRGLHSAFTLRKVSNGVGVERVLQTHSPIIDSIFVKRKGAVRKAKLYYLRERSGKSARIKERLGN.

This sequence belongs to the bacterial ribosomal protein bL19 family.

Functionally, this protein is located at the 30S-50S ribosomal subunit interface and may play a role in the structure and function of the aminoacyl-tRNA binding site. The chain is Large ribosomal subunit protein bL19 from Haemophilus ducreyi (strain 35000HP / ATCC 700724).